Consider the following 116-residue polypeptide: MTEQTDVAMPISFTDAAAAKVKALLDEEQNDALKLRVYVTGGGCSGFQYGFTFDEKVNDGDFTVEKQGVQLVVDPMSLQYLMGGEVDYTSGLEGSRFFVKNPNATTTCGCGASFSV.

Iron-sulfur cluster contacts are provided by Cys44, Cys108, and Cys110.

This sequence belongs to the HesB/IscA family. As to quaternary structure, homodimer. Iron-sulfur cluster is required as a cofactor.

Functionally, required for insertion of 4Fe-4S clusters for at least IspG. The chain is Iron-sulfur cluster insertion protein ErpA from Shewanella amazonensis (strain ATCC BAA-1098 / SB2B).